Reading from the N-terminus, the 70-residue chain is Small ribosomal subunit protein bS21A (70 aa).

It belongs to the bacterial ribosomal protein bS21 family.

The polypeptide is Small ribosomal subunit protein bS21A (rpsU1) (Burkholderia mallei (strain ATCC 23344)).